A 196-amino-acid polypeptide reads, in one-letter code: MSANSLLGSLRELQVLVLNPPGEVSDALVLQLIRIGCSVRQCWPPPESFDVPVDVVFTSIFQNRHHDEIAALLAAGTPRTTLVALVEYESPAVLSQIIELECHGVITQPLDAHRVLPVLVSARRISEEMAKLKQKTEQLQERIAGQARINQAKALLMQRHGWDEREAHQYLSREAMKRREPILKIAQELLGNEPSA.

The 62-residue stretch at 129-190 folds into the ANTAR domain; sequence MAKLKQKTEQ…PILKIAQELL (62 aa).

As to quaternary structure, forms a complex with AmiC.

Its function is as follows. Positive controlling element of AmiE, the gene for aliphatic amidase. Acts as a transcriptional antitermination factor. It is thought to allow RNA polymerase read through a rho-independent transcription terminator between the AmiE promoter and gene. The sequence is that of Aliphatic amidase regulator (amiR) from Pseudomonas aeruginosa (strain ATCC 15692 / DSM 22644 / CIP 104116 / JCM 14847 / LMG 12228 / 1C / PRS 101 / PAO1).